The chain runs to 302 residues: GTP cyclohydrolase FolE2 (302 aa).

The tract at residues 1-27 (MPKKQLPPKEERHKLFGSVPPKERTKP) is disordered.

This sequence belongs to the GTP cyclohydrolase IV family.

It carries out the reaction GTP + H2O = 7,8-dihydroneopterin 3'-triphosphate + formate + H(+). Its pathway is cofactor biosynthesis; 7,8-dihydroneopterin triphosphate biosynthesis; 7,8-dihydroneopterin triphosphate from GTP: step 1/1. Converts GTP to 7,8-dihydroneopterin triphosphate. This is GTP cyclohydrolase FolE2 from Oceanobacillus iheyensis (strain DSM 14371 / CIP 107618 / JCM 11309 / KCTC 3954 / HTE831).